A 92-amino-acid chain; its full sequence is Small ribosomal subunit protein uS19 (92 aa).

The protein belongs to the universal ribosomal protein uS19 family.

Functionally, protein S19 forms a complex with S13 that binds strongly to the 16S ribosomal RNA. This chain is Small ribosomal subunit protein uS19, found in Rippkaea orientalis (strain PCC 8801 / RF-1) (Cyanothece sp. (strain PCC 8801)).